The primary structure comprises 261 residues: Neurexophilin-2 (261 aa).

The first 22 residues, 1 to 22 (MSLRPLPLLVVPGLLQLLFCDS), serve as a signal peptide directing secretion. The tract at residues 23–87 (EEVIHNTESV…WDWLANITEI (65 aa)) is II. Asparagine 83, asparagine 136, asparagine 146, and asparagine 152 each carry an N-linked (GlcNAc...) asparagine glycan. The III stretch occupies residues 88-166 (QEQLARTKRR…LVPPSKVVEF (79 aa)). The segment at 167–175 (EISPQSTLE) is IV (linker domain). The interval 176-261 (TKESKSFNCH…HSETPYLSFG (86 aa)) is v (Cys-rich).

Belongs to the neurexophilin family. In terms of processing, may be proteolytically processed at the boundary between the N-terminal non-conserved and the central conserved domain in neuron-like cells.

The protein localises to the secreted. Its function is as follows. May be signaling molecules that resemble neuropeptides and that act by binding to alpha-neurexins and possibly other receptors. The protein is Neurexophilin-2 (Nxph2) of Mus musculus (Mouse).